The following is a 174-amino-acid chain: Protein GrpE (174 aa).

The interval 1-35 (MAQDIKNEEVEEVQEEEVVETAEETTPEKSELDLA) is disordered. Positions 9-25 (EVEEVQEEEVVETAEET) are enriched in acidic residues. A compositionally biased stretch (basic and acidic residues) spans 26–35 (TPEKSELDLA).

This sequence belongs to the GrpE family. Homodimer.

The protein localises to the cytoplasm. In terms of biological role, participates actively in the response to hyperosmotic and heat shock by preventing the aggregation of stress-denatured proteins, in association with DnaK and GrpE. It is the nucleotide exchange factor for DnaK and may function as a thermosensor. Unfolded proteins bind initially to DnaJ; upon interaction with the DnaJ-bound protein, DnaK hydrolyzes its bound ATP, resulting in the formation of a stable complex. GrpE releases ADP from DnaK; ATP binding to DnaK triggers the release of the substrate protein, thus completing the reaction cycle. Several rounds of ATP-dependent interactions between DnaJ, DnaK and GrpE are required for fully efficient folding. This Streptococcus pneumoniae (strain ATCC 700669 / Spain 23F-1) protein is Protein GrpE.